The chain runs to 572 residues: Phosphoenolpyruvate-protein phosphotransferase (572 aa).

Residue His-190 is the Tele-phosphohistidine intermediate of the active site. Phosphoenolpyruvate is bound by residues Arg-297 and Arg-333. Mg(2+)-binding residues include Glu-432 and Asp-456. Phosphoenolpyruvate is bound by residues 455-456 and Arg-466; that span reads ND. The active-site Proton donor is the Cys-503.

Belongs to the PEP-utilizing enzyme family. In terms of assembly, homodimer. The cofactor is Mg(2+).

The protein resides in the cytoplasm. It carries out the reaction L-histidyl-[protein] + phosphoenolpyruvate = N(pros)-phospho-L-histidyl-[protein] + pyruvate. In terms of biological role, general (non sugar-specific) component of the phosphoenolpyruvate-dependent sugar phosphotransferase system (sugar PTS). This major carbohydrate active-transport system catalyzes the phosphorylation of incoming sugar substrates concomitantly with their translocation across the cell membrane. Enzyme I transfers the phosphoryl group from phosphoenolpyruvate (PEP) to the phosphoryl carrier protein (HPr). The polypeptide is Phosphoenolpyruvate-protein phosphotransferase (ptsI) (Listeria monocytogenes serovar 1/2a (strain ATCC BAA-679 / EGD-e)).